A 244-amino-acid polypeptide reads, in one-letter code: 5-oxoprolinase subunit A (244 aa).

Belongs to the LamB/PxpA family. Forms a complex composed of PxpA, PxpB and PxpC.

The catalysed reaction is 5-oxo-L-proline + ATP + 2 H2O = L-glutamate + ADP + phosphate + H(+). Its function is as follows. Catalyzes the cleavage of 5-oxoproline to form L-glutamate coupled to the hydrolysis of ATP to ADP and inorganic phosphate. This is 5-oxoprolinase subunit A from Salmonella dublin (strain CT_02021853).